A 103-amino-acid chain; its full sequence is Co-chaperonin GroES (103 aa).

It belongs to the GroES chaperonin family. In terms of assembly, heptamer of 7 subunits arranged in a ring. Interacts with the chaperonin GroEL.

The protein localises to the cytoplasm. Functionally, together with the chaperonin GroEL, plays an essential role in assisting protein folding. The GroEL-GroES system forms a nano-cage that allows encapsulation of the non-native substrate proteins and provides a physical environment optimized to promote and accelerate protein folding. GroES binds to the apical surface of the GroEL ring, thereby capping the opening of the GroEL channel. The polypeptide is Co-chaperonin GroES (Synechococcus sp. (strain CC9311)).